The sequence spans 621 residues: Cyclic nucleotide-gated ion channel 11 (621 aa).

At M1 to T43 the chain is on the cytoplasmic side. The helical transmembrane segment at V44 to I64 threads the bilayer. Residues D65–T76 lie on the Extracellular side of the membrane. The chain crosses the membrane as a helical span at residues L77 to I97. Residues Y98 to R128 lie on the Cytoplasmic side of the membrane. The chain crosses the membrane as a helical span at residues L129–L149. Over T150–R162 the chain is Extracellular. The helical transmembrane segment at I163 to Y183 threads the bilayer. Over K184–R198 the chain is Cytoplasmic. The helical transmembrane segment at V199–W219 threads the bilayer. Topologically, residues Y220–G329 are extracellular. The chain crosses the membrane as a helical span at residues E330 to G350. Over N351 to A621 the chain is Cytoplasmic. Residues L435–Q556 and D506 contribute to the a nucleoside 3',5'-cyclic phosphate site. Residues Y549 to Y564 form a calmodulin-binding region. The IQ domain occupies Q569–K598.

Belongs to the cyclic nucleotide-gated cation channel (TC 1.A.1.5) family. As to quaternary structure, homotetramer or heterotetramer.

The protein localises to the cell membrane. In terms of biological role, putative cyclic nucleotide-gated ion channel. This Arabidopsis thaliana (Mouse-ear cress) protein is Cyclic nucleotide-gated ion channel 11 (CNGC11).